Consider the following 265-residue polypeptide: Hydroxyethylthiazole kinase (265 aa).

Residue M50 coordinates substrate. Residues R125 and T171 each contribute to the ATP site. G198 is a substrate binding site.

It belongs to the Thz kinase family. It depends on Mg(2+) as a cofactor.

It carries out the reaction 5-(2-hydroxyethyl)-4-methylthiazole + ATP = 4-methyl-5-(2-phosphooxyethyl)-thiazole + ADP + H(+). Its pathway is cofactor biosynthesis; thiamine diphosphate biosynthesis; 4-methyl-5-(2-phosphoethyl)-thiazole from 5-(2-hydroxyethyl)-4-methylthiazole: step 1/1. Catalyzes the phosphorylation of the hydroxyl group of 4-methyl-5-beta-hydroxyethylthiazole (THZ). The polypeptide is Hydroxyethylthiazole kinase (Salmonella schwarzengrund (strain CVM19633)).